A 422-amino-acid polypeptide reads, in one-letter code: MNVRTIADLGPDERAAFFDRDAGVDAVRDDVRDIVSQVHEEGDVALRRFAEEFDDVSVGNIDITDAAERAYEEIDDDVREAIEDAAANIRAFHERQVPEDWRDDFEGRELGRRFRPLDSAGVYAPGGTAAYPSSALMGVIPAKVAGVEHVAVATPPAEEVNPVTLAAIHVAGADAVYQVGGAQAIAALAYGTETVSATDIVVGPGNRWVTAAKAEVRGDVAIDFLAGPSEVMVVADGDADPELVAADLIAQAEHDENASVVAVTDDADLAEQVVDAVDEQADGREREAVIRAALDNDTSGVLLARSMSEAVLFAEEYAAEHLSIQAADDESLLERIPSAGSVFLGPYSPVAAGDYATGTNHVLPTGGNARVTGGLSVDTFVRSTTVQRLSEDSLGDIADTITTLAEAEGLDAHAESVRKRFE.

3 residues coordinate NAD(+): Y123, Q183, and N206. Residues S229, Q251, and H254 each coordinate substrate. 2 residues coordinate Zn(2+): Q251 and H254. Residues E320 and H321 each act as proton acceptor in the active site. 4 residues coordinate substrate: H321, D354, E408, and H413. D354 serves as a coordination point for Zn(2+). H413 serves as a coordination point for Zn(2+).

Belongs to the histidinol dehydrogenase family. Zn(2+) serves as cofactor.

The catalysed reaction is L-histidinol + 2 NAD(+) + H2O = L-histidine + 2 NADH + 3 H(+). It functions in the pathway amino-acid biosynthesis; L-histidine biosynthesis; L-histidine from 5-phospho-alpha-D-ribose 1-diphosphate: step 9/9. Its function is as follows. Catalyzes the sequential NAD-dependent oxidations of L-histidinol to L-histidinaldehyde and then to L-histidine. The protein is Histidinol dehydrogenase of Haloarcula marismortui (strain ATCC 43049 / DSM 3752 / JCM 8966 / VKM B-1809) (Halobacterium marismortui).